The sequence spans 208 residues: Guanylate kinase (208 aa).

The 181-residue stretch at 21–201 folds into the Guanylate kinase-like domain; that stretch reads GRVVVLSGPS…ACAELVSLLV (181 aa). 28–35 contributes to the ATP binding site; the sequence is GPSAVGKS.

Belongs to the guanylate kinase family.

Its subcellular location is the cytoplasm. The enzyme catalyses GMP + ATP = GDP + ADP. Functionally, essential for recycling GMP and indirectly, cGMP. The protein is Guanylate kinase (gmk) of Mycobacterium bovis (strain ATCC BAA-935 / AF2122/97).